The chain runs to 182 residues: Adenylate kinase (182 aa).

12-17 provides a ligand contact to ATP; sequence GAGKGT. The interval 32–61 is NMP; that stretch reads STGELLRKEIEMNTNLGIQVKDIMNRGELV. Residues Thr-33, Arg-38, 59-61, 85-88, and Gln-92 contribute to the AMP site; these read ELV and GYPR. An LID region spans residues 126 to 132; that stretch reads LRGRKDD. Residue Arg-127 coordinates ATP. 2 residues coordinate AMP: Arg-129 and Arg-140. Arg-168 lines the ATP pocket.

It belongs to the adenylate kinase family. Monomer.

The protein localises to the cytoplasm. It catalyses the reaction AMP + ATP = 2 ADP. It functions in the pathway purine metabolism; AMP biosynthesis via salvage pathway; AMP from ADP: step 1/1. Catalyzes the reversible transfer of the terminal phosphate group between ATP and AMP. Plays an important role in cellular energy homeostasis and in adenine nucleotide metabolism. The chain is Adenylate kinase from Prochlorococcus marinus (strain AS9601).